Here is a 293-residue protein sequence, read N- to C-terminus: 4-hydroxy-tetrahydrodipicolinate synthase (293 aa).

Thr-47 contacts pyruvate. Tyr-136 (proton donor/acceptor) is an active-site residue. The Schiff-base intermediate with substrate role is filled by Lys-164. Position 206 (Ile-206) interacts with pyruvate.

This sequence belongs to the DapA family. In terms of assembly, homotetramer; dimer of dimers.

Its subcellular location is the cytoplasm. The enzyme catalyses L-aspartate 4-semialdehyde + pyruvate = (2S,4S)-4-hydroxy-2,3,4,5-tetrahydrodipicolinate + H2O + H(+). The protein operates within amino-acid biosynthesis; L-lysine biosynthesis via DAP pathway; (S)-tetrahydrodipicolinate from L-aspartate: step 3/4. In terms of biological role, catalyzes the condensation of (S)-aspartate-beta-semialdehyde [(S)-ASA] and pyruvate to 4-hydroxy-tetrahydrodipicolinate (HTPA). The chain is 4-hydroxy-tetrahydrodipicolinate synthase from Listeria monocytogenes serovar 1/2a (strain ATCC BAA-679 / EGD-e).